We begin with the raw amino-acid sequence, 147 residues long: ATP synthase epsilon chain (147 aa).

This sequence belongs to the ATPase epsilon chain family. F-type ATPases have 2 components, CF(1) - the catalytic core - and CF(0) - the membrane proton channel. CF(1) has five subunits: alpha(3), beta(3), gamma(1), delta(1), epsilon(1). CF(0) has three main subunits: a, b and c.

It is found in the cell inner membrane. In terms of biological role, produces ATP from ADP in the presence of a proton gradient across the membrane. The protein is ATP synthase epsilon chain of Protochlamydia amoebophila (strain UWE25).